The following is a 146-amino-acid chain: VPIQKVQDDTKTLIKTIVTRINDISHTQSVSSKQKVTGLDFIPGLHPILTLSKMDQTLAVYQQILTSMPSRNMIQISNDLENLRDLLHVLAFSKSCHLPWASGLETLDSLGGVLEASGYSTEVVALSRLQGSLQDMLWQLDLSPGC.

A disulfide bridge connects residues Cys-96 and Cys-146.

Belongs to the leptin family.

It is found in the secreted. Functionally, key player in the regulation of energy balance and body weight control. Once released into the circulation, has central and peripheral effects by binding LEPR, found in many tissues, which results in the activation of several major signaling pathways. In the hypothalamus, acts as an appetite-regulating factor that induces a decrease in food intake and an increase in energy consumption by inducing anorexinogenic factors and suppressing orexigenic neuropeptides, also regulates bone mass and secretion of hypothalamo-pituitary-adrenal hormones. In the periphery, increases basal metabolism, influences reproductive function, regulates pancreatic beta-cell function and insulin secretion, is pro-angiogenic for endothelial cell and affects innate and adaptive immunity. In the arcuate nucleus of the hypothalamus, activates by depolarization POMC neurons inducing FOS and SOCS3 expression to release anorexigenic peptides and inhibits by hyperpolarization NPY neurons inducing SOCS3 with a consequent reduction on release of orexigenic peptides. In addition to its known satiety inducing effect, has a modulatory role in nutrient absorption. In the intestine, reduces glucose absorption by enterocytes by activating PKC and leading to a sequential activation of p38, PI3K and ERK signaling pathways which exerts an inhibitory effect on glucose absorption. Acts as a growth factor on certain tissues, through the activation of different signaling pathways increases expression of genes involved in cell cycle regulation such as CCND1, via JAK2-STAT3 pathway, or VEGFA, via MAPK1/3 and PI3K-AKT1 pathways. May also play an apoptotic role via JAK2-STAT3 pathway and up-regulation of BIRC5 expression. Pro-angiogenic, has mitogenic activity on vascular endothelial cells and plays a role in matrix remodeling by regulating the expression of matrix metalloproteinases (MMPs) and tissue inhibitors of metalloproteinases (TIMPs). In innate immunity, modulates the activity and function of neutrophils by increasing chemotaxis and the secretion of oxygen radicals. Increases phagocytosis by macrophages and enhances secretion of pro-inflammatory mediators. Increases cytotoxic ability of NK cells. Plays a pro-inflammatory role, in synergy with IL1B, by inducing NOS2 which promotes the production of IL6, IL8 and Prostaglandin E2, through a signaling pathway that involves JAK2, PI3K, MAP2K1/MEK1 and MAPK14/p38. In adaptive immunity, promotes the switch of memory T-cells towards T helper-1 cell immune responses. Increases CD4(+)CD25(-) T-cell proliferation and reduces autophagy during TCR (T-cell receptor) stimulation, through MTOR signaling pathway activation and BCL2 up-regulation. In Pan troglodytes (Chimpanzee), this protein is Leptin (LEP).